The sequence spans 237 residues: N-demethylindolmycin N-methyltransferase (237 aa).

The protein belongs to the methyltransferase superfamily.

It carries out the reaction N-demethylindolmycin + S-adenosyl-L-methionine = indolmycin + S-adenosyl-L-homocysteine + H(+). Functionally, involved in the biosynthesis of the antibiotic indolmycin, an inhibitor of the bacterial tryptophan-tRNA synthetases. Catalyzes the methylation of N-demethylindolmycin to yield indolmycin, with S-adenosylmethionine (AdoMet) acting as the methyl donor. The chain is N-demethylindolmycin N-methyltransferase from Streptomyces griseus.